The primary structure comprises 401 residues: Enolase (401 aa).

(2R)-2-phosphoglycerate is bound at residue Gln-154. Residue Glu-196 is the Proton donor of the active site. Positions 232, 275, and 302 each coordinate Mg(2+). The (2R)-2-phosphoglycerate site is built by Lys-327, Arg-356, Ser-357, and Lys-378. Residue Lys-327 is the Proton acceptor of the active site.

The protein belongs to the enolase family. Mg(2+) is required as a cofactor.

It localises to the cytoplasm. The protein localises to the secreted. The protein resides in the cell surface. The catalysed reaction is (2R)-2-phosphoglycerate = phosphoenolpyruvate + H2O. The protein operates within carbohydrate degradation; glycolysis; pyruvate from D-glyceraldehyde 3-phosphate: step 4/5. Functionally, catalyzes the reversible conversion of 2-phosphoglycerate (2-PG) into phosphoenolpyruvate (PEP). It is essential for the degradation of carbohydrates via glycolysis. This Haloquadratum walsbyi (strain DSM 16790 / HBSQ001) protein is Enolase.